The chain runs to 166 residues: 2-C-methyl-D-erythritol 2,4-cyclodiphosphate synthase (166 aa).

A divalent metal cation is bound by residues D15 and H17. 4-CDP-2-C-methyl-D-erythritol 2-phosphate-binding positions include 15-17 (DIH) and 43-44 (HS). H51 is a binding site for a divalent metal cation. 4-CDP-2-C-methyl-D-erythritol 2-phosphate-binding positions include 65–67 (DIG), 141–144 (TTNE), and R151.

It belongs to the IspF family. In terms of assembly, homotrimer. The cofactor is a divalent metal cation.

The catalysed reaction is 4-CDP-2-C-methyl-D-erythritol 2-phosphate = 2-C-methyl-D-erythritol 2,4-cyclic diphosphate + CMP. It functions in the pathway isoprenoid biosynthesis; isopentenyl diphosphate biosynthesis via DXP pathway; isopentenyl diphosphate from 1-deoxy-D-xylulose 5-phosphate: step 4/6. Involved in the biosynthesis of isopentenyl diphosphate (IPP) and dimethylallyl diphosphate (DMAPP), two major building blocks of isoprenoid compounds. Catalyzes the conversion of 4-diphosphocytidyl-2-C-methyl-D-erythritol 2-phosphate (CDP-ME2P) to 2-C-methyl-D-erythritol 2,4-cyclodiphosphate (ME-CPP) with a corresponding release of cytidine 5-monophosphate (CMP). The protein is 2-C-methyl-D-erythritol 2,4-cyclodiphosphate synthase of Prochlorococcus marinus (strain MIT 9215).